The sequence spans 260 residues: Small ribosomal subunit protein uS2 (260 aa).

Positions 225–260 (KGQTQTEAAPNAQAAPEAAAPAEQPAEEAAAASSEG) are disordered. Low complexity predominate over residues 231-260 (EAAPNAQAAPEAAAPAEQPAEEAAAASSEG).

It belongs to the universal ribosomal protein uS2 family.

In Rhodopirellula baltica (strain DSM 10527 / NCIMB 13988 / SH1), this protein is Small ribosomal subunit protein uS2.